Here is a 359-residue protein sequence, read N- to C-terminus: MIDAMYATGQGLMGGIWPATVWPVLWVLIKIVAVLAPLMGCVAYLTLWERKAIGFTQVRVGPNRIGPFGLLQPIADALKLLTKEIIIPTAASKGLFILGPIMTIMPALAAWAVIPFGPDVALANVNAGLLFIMAITSLEVYGVIIAGWGSNSKYAFLGAMRASAQMVSYEIAMGFCLVVVLMVSGSLNMTDIVMSQGSGMAASKGLTFLSWNWLPLLPIFVVYFISSLAETNRHPFDVVEGESEIVAGHMVEYSGMSFAMFFLAEYANMILVSVLCVLLFLGGWLSPIDSALFTWIPGWIWLGLKTFVVVTIFLWVRSTFPRFRYDQIMRLGWKIFIPVTLVWLVVVGAWMQTPYNIWK.

8 helical membrane-spanning segments follow: residues 16 to 36 (IWPA…AVLA), 94 to 114 (GLFI…WAVI), 128 to 148 (GLLF…IAGW), 167 to 187 (VSYE…SGSL), 205 to 225 (GLTF…VYFI), 261 to 281 (FFLA…LLFL), 296 to 316 (IPGW…FLWV), and 331 to 351 (LGWK…GAWM).

This sequence belongs to the complex I subunit 1 family. NDH-1 is composed of 14 different subunits. Subunits NuoA, H, J, K, L, M, N constitute the membrane sector of the complex.

The protein resides in the cell inner membrane. It carries out the reaction a quinone + NADH + 5 H(+)(in) = a quinol + NAD(+) + 4 H(+)(out). Its function is as follows. NDH-1 shuttles electrons from NADH, via FMN and iron-sulfur (Fe-S) centers, to quinones in the respiratory chain. The immediate electron acceptor for the enzyme in this species is believed to be ubiquinone. Couples the redox reaction to proton translocation (for every two electrons transferred, four hydrogen ions are translocated across the cytoplasmic membrane), and thus conserves the redox energy in a proton gradient. This subunit may bind ubiquinone. This Polaromonas naphthalenivorans (strain CJ2) protein is NADH-quinone oxidoreductase subunit H.